Reading from the N-terminus, the 136-residue chain is ATP synthase epsilon chain (136 aa).

This sequence belongs to the ATPase epsilon chain family. As to quaternary structure, F-type ATPases have 2 components, CF(1) - the catalytic core - and CF(0) - the membrane proton channel. CF(1) has five subunits: alpha(3), beta(3), gamma(1), delta(1), epsilon(1). CF(0) has three main subunits: a, b and c.

The protein localises to the cell inner membrane. Its function is as follows. Produces ATP from ADP in the presence of a proton gradient across the membrane. The polypeptide is ATP synthase epsilon chain (Afipia carboxidovorans (strain ATCC 49405 / DSM 1227 / KCTC 32145 / OM5) (Oligotropha carboxidovorans)).